A 182-amino-acid chain; its full sequence is Homeobox expressed in ES cells 1-A (182 aa).

Residues 103–163 (YRGRRPRTAF…QNRRAKLKRS (61 aa)) constitute a DNA-binding region (homeobox).

This sequence belongs to the ANF homeobox family. As to expression, initially expressed in the anterior dorsal region of early embryos and later exclusively in the primordium of the anterior pituitary gland.

It localises to the nucleus. In terms of biological role, appears to be involved in the regional specification of the anterior head of Xenopus embryos. The polypeptide is Homeobox expressed in ES cells 1-A (hesx1-a) (Xenopus laevis (African clawed frog)).